Here is a 715-residue protein sequence, read N- to C-terminus: Fatty acid oxidation complex subunit alpha (715 aa).

The enoyl-CoA hydratase/isomerase stretch occupies residues 1 to 190 (MIYEGKAITV…KVGAVDAVVA (190 aa)). D297 lines the substrate pocket. The tract at residues 312-715 (KDVKQAAVLG…MAKNGQSFFG (404 aa)) is 3-hydroxyacyl-CoA dehydrogenase. Residues M325, D344, 401–403 (VVE), K408, and S430 contribute to the NAD(+) site. Catalysis depends on H451, which acts as the For 3-hydroxyacyl-CoA dehydrogenase activity. N454 provides a ligand contact to NAD(+). Positions 501 and 660 each coordinate substrate.

This sequence in the N-terminal section; belongs to the enoyl-CoA hydratase/isomerase family. It in the C-terminal section; belongs to the 3-hydroxyacyl-CoA dehydrogenase family. As to quaternary structure, heterotetramer of two alpha chains (FadB) and two beta chains (FadA).

It carries out the reaction a (3S)-3-hydroxyacyl-CoA + NAD(+) = a 3-oxoacyl-CoA + NADH + H(+). The enzyme catalyses a (3S)-3-hydroxyacyl-CoA = a (2E)-enoyl-CoA + H2O. It catalyses the reaction a 4-saturated-(3S)-3-hydroxyacyl-CoA = a (3E)-enoyl-CoA + H2O. The catalysed reaction is (3S)-3-hydroxybutanoyl-CoA = (3R)-3-hydroxybutanoyl-CoA. It carries out the reaction a (3Z)-enoyl-CoA = a 4-saturated (2E)-enoyl-CoA. The enzyme catalyses a (3E)-enoyl-CoA = a 4-saturated (2E)-enoyl-CoA. The protein operates within lipid metabolism; fatty acid beta-oxidation. Its function is as follows. Involved in the aerobic and anaerobic degradation of long-chain fatty acids via beta-oxidation cycle. Catalyzes the formation of 3-oxoacyl-CoA from enoyl-CoA via L-3-hydroxyacyl-CoA. It can also use D-3-hydroxyacyl-CoA and cis-3-enoyl-CoA as substrate. The sequence is that of Fatty acid oxidation complex subunit alpha from Pseudomonas fluorescens (strain ATCC BAA-477 / NRRL B-23932 / Pf-5).